Reading from the N-terminus, the 1113-residue chain is uncharacterized protein (1113 aa).

313–320 (GPPGTGKS) contacts ATP.

This sequence belongs to the DNA2/NAM7 helicase family.

This is an uncharacterized protein from Mycoplasma pneumoniae (strain ATCC 29342 / M129 / Subtype 1) (Mycoplasmoides pneumoniae).